A 222-amino-acid polypeptide reads, in one-letter code: UPF0316 protein Mboo_0791 (222 aa).

3 consecutive transmembrane segments (helical) span residues 25–45 (FFLF…IFLA), 67–87 (LAPV…VGVL), and 93–113 (IAYF…GLVI).

Belongs to the UPF0316 family.

It localises to the cell membrane. The chain is UPF0316 protein Mboo_0791 from Methanoregula boonei (strain DSM 21154 / JCM 14090 / 6A8).